A 153-amino-acid polypeptide reads, in one-letter code: Ribosomal RNA large subunit methyltransferase H (153 aa).

Residues Leu-75, Gly-102, and 121–126 each bind S-adenosyl-L-methionine; that span reads LSPLTM.

It belongs to the RNA methyltransferase RlmH family. Homodimer.

The protein localises to the cytoplasm. It catalyses the reaction pseudouridine(1915) in 23S rRNA + S-adenosyl-L-methionine = N(3)-methylpseudouridine(1915) in 23S rRNA + S-adenosyl-L-homocysteine + H(+). Specifically methylates the pseudouridine at position 1915 (m3Psi1915) in 23S rRNA. This chain is Ribosomal RNA large subunit methyltransferase H, found in Nitratiruptor sp. (strain SB155-2).